We begin with the raw amino-acid sequence, 473 residues long: MSEESDMDKAIKETSILEEYSINWTQKLGAGISGPVRVCVKKSTQERFALKILLDRPKARNEVRLHMMCATHPNIVQIIEVFANSVQFPHESSPRARLLIVMEMMEGGELFHRISQHRHFTEKQASQVTKQIALALRHCHLLNIAHRDLKPENLLFKDNSLDAPVKLCDFGFAKIDQGDLMTPQFTPYYVAPQVLEAQRRHQKEKSGIIPTSPTPYTYNKSCDLWSLGVIIYVMLCGYPPFYSKHHSRTIPKDMRRKIMTGSFEFPEEEWSQISEMAKDVVRKLLKVKPEERLTIEGVLDHPWLNSTEALDNVLPSAQLMMDKAVVAGIQQAHAEQLANMRIQDLKVSLKPLHSVNNPILRKRKLLGTKPKDSVYIHDHENGAEDSNVALEKLRDVIAQCILPQAGKGENEDEKLNEVMQEAWKYNRECKLLRDTLQSFSWNGRGFTDKVDRLKLAEIVKQVIEEQTTSHESQ.

The Protein kinase domain maps to 22–304 (INWTQKLGAG…IEGVLDHPWL (283 aa)). ATP is bound by residues 28–36 (LGAGISGPV) and Lys51. Ser115 carries the post-translational modification Phosphoserine; by PKA. The active-site Proton acceptor is Asp148. Thr182 carries the post-translational modification Phosphothreonine; by MAPK11, MAPK14, MAPK4, MAPK6 and PKA. Residues Ser212 and Ser354 each carry the phosphoserine modification. A coiled-coil region spans residues 409–440 (ENEDEKLNEVMQEAWKYNRECKLLRDTLQSFS).

The protein belongs to the protein kinase superfamily. CAMK Ser/Thr protein kinase family. Interacts with ERK3/MAPK6 and ERK4/MAPK4 (via FRIEDE motif); the interaction is direct. Interacts with YWHAE; the interaction prevents phosphorylation of HSP27/HSPB1 leading to disrupt F-actin polymerization. Interacts with SQSTM1. Post-translationally, phosphorylated on Thr-182 ERK3/MAPK6 or ERK4/MAPK4; which is the regulatory phosphorylation site and is located on the T-loop/loop 12, leading to activation. Phosphorylation at Thr-182 by p38-alpha/MAPK14, p38-beta/MAPK11 is subject to debate. Phosphorylated at Ser-115 by PKA/PRKACA, leading to localization to the cytoplasm. Autophosphorylated. Expressed ubiquitously.

The protein resides in the cytoplasm. It is found in the nucleus. The enzyme catalyses L-seryl-[protein] + ATP = O-phospho-L-seryl-[protein] + ADP + H(+). It catalyses the reaction L-threonyl-[protein] + ATP = O-phospho-L-threonyl-[protein] + ADP + H(+). With respect to regulation, activated following phosphorylation at Thr-182 by p38-alpha/MAPK14, p38-beta/MAPK11, ERK2/MAPK1, ERK3/MAPK6, and ERK4/MAPK4. Activated by stress-related extracellular stimuli; such as H(2)O(2), arsenite, anisomycin TNF alpha and also PMA and the calcium ionophore A23187; but to a lesser extent. In vitro, activated by SQSTM1. Inhibited by diterpenoid alkaloid noroxoaconitine. Tumor suppressor serine/threonine-protein kinase involved in mTORC1 signaling and post-transcriptional regulation. Phosphorylates FOXO3, ERK3/MAPK6, ERK4/MAPK4, HSP27/HSPB1, p53/TP53 and RHEB. Acts as a tumor suppressor by mediating Ras-induced senescence and phosphorylating p53/TP53. Involved in post-transcriptional regulation of MYC by mediating phosphorylation of FOXO3: phosphorylation of FOXO3 leads to promote nuclear localization of FOXO3, enabling expression of miR-34b and miR-34c, 2 post-transcriptional regulators of MYC that bind to the 3'UTR of MYC transcript and prevent MYC translation. Acts as a negative regulator of mTORC1 signaling by mediating phosphorylation and inhibition of RHEB. Part of the atypical MAPK signaling via its interaction with ERK3/MAPK6 or ERK4/MAPK4: the precise role of the complex formed with ERK3/MAPK6 or ERK4/MAPK4 is still unclear, but the complex follows a complex set of phosphorylation events: upon interaction with atypical MAPK (ERK3/MAPK6 or ERK4/MAPK4), ERK3/MAPK6 (or ERK4/MAPK4) is phosphorylated and then mediates phosphorylation and activation of MAPKAPK5, which in turn phosphorylates ERK3/MAPK6 (or ERK4/MAPK4). Mediates phosphorylation of HSP27/HSPB1 in response to PKA/PRKACA stimulation, inducing F-actin rearrangement. This chain is MAP kinase-activated protein kinase 5 (MAPKAPK5), found in Homo sapiens (Human).